Consider the following 434-residue polypeptide: Putative polysaccharide biosynthesis protein with aminopeptidase-like domain (434 aa).

2 aminopeptidase-like regions span residues 1-55 and 57-355; these read MEEI…IHEV and SGTK…IENN. Positions 56-164 are insert; sequence KSGTKVFDWT…VVIDSSLEDG (109 aa). H189, D195, and H324 together coordinate Zn(2+). The permutated winged helix-turn-helix stretch occupies residues 356 to 434; the sequence is RTYLNLNPKC…LYRVELLKLV (79 aa).

This sequence belongs to the UPF0770 family. As to quaternary structure, homotrimer. Zn(2+) is required as a cofactor.

The genomic context suggests a role in the biosynthesis of modified polysaccharides; this association with genes involved in carbohydrate metabolism is observed in several phylogenetically distinct taxa. Is not expected to have peptidase activity despite low similarity to aminopeptidases. In Clostridium acetobutylicum (strain ATCC 824 / DSM 792 / JCM 1419 / IAM 19013 / LMG 5710 / NBRC 13948 / NRRL B-527 / VKM B-1787 / 2291 / W), this protein is Putative polysaccharide biosynthesis protein with aminopeptidase-like domain.